The sequence spans 659 residues: WD repeat-containing protein 48 homolog (659 aa).

WD repeat units lie at residues 27 to 66 (RHRNGVNALQLDTINGRLYSAGRDAIIRVWNSMQNNSQEP), 73 to 112 (HHNDWVNDIVLCCGGRNLISASCDTTVKVWNAHKGFCMST), 115 to 154 (THRDYVQALAYAKDREQVASAGLDKAIFLWDINTLTALTA), 166 to 205 (GSKDSIYSLAMNPSGTVIVCGSTENTLRIWDPRTCNKIAK), 208 to 247 (GHAENVKALVVSEDGQHVISGSSDGKIKQWSIGQQRCVQT), 250 to 289 (VHSEGVWALLMTDNFSHVISGSRDKKIIMTDLRNPTNSVL), 292 to 331 (EERAPVLSLCYNYDQTGVWATTWNSDIRCWKLNPSEKLSF), and 337 to 376 (KGGAAIKKYHVLNDKRFMLTKDSEMNVAIYDVLKVKKVED). Residues 592–613 (ASTGNSNSSQNNSQSDANSEGS) are disordered. The span at 596-610 (NSNSSQNNSQSDANS) shows a compositional bias: low complexity.

This sequence belongs to the WD repeat WDR48 family. As to quaternary structure, catalytic component of the Usp12-46 deubiquitylase complex consisting of Usp12-46, Wdr20 and Uaf1; regulatory subunit that, together wtih Wdr20, stabilizes Usp12-46. The Usp12-46 deubiquitylase complex associates with arr/arrow; the interaction leads to deubiquitination and stabilization of arr/arrow.

Functionally, regulatory component of the Usp12-46 deubiquitylase complex. activates deubiquitination by increasing the catalytic turnover without increasing the affinity of deubiquitinating enzymes for the substrate. The complex deubiquitylates the wg/wingless-signaling receptor arr/arrow, which stabilizes the receptor and increases its concentration at the cell surface; this enhances the sensitivity of cells to wg/wingless-signal stimulation. This increases the amplitude and spatial range of the signaling response to the wg/wingless morphogen gradient, facilitating the precise concentration-dependent regulation of its target genes. Together with Wdr20 and Usp12-46 required for wg/wingless-mediated signaling in the wing imaginal disc and for wg/wingless-dependent regulation of intestinal stem cell proliferation. This chain is WD repeat-containing protein 48 homolog, found in Aedes aegypti (Yellowfever mosquito).